Here is a 446-residue protein sequence, read N- to C-terminus: Na(+)-translocating NADH-quinone reductase subunit A (446 aa).

It belongs to the NqrA family. Composed of six subunits; NqrA, NqrB, NqrC, NqrD, NqrE and NqrF.

It carries out the reaction a ubiquinone + n Na(+)(in) + NADH + H(+) = a ubiquinol + n Na(+)(out) + NAD(+). Its activity is regulated as follows. This reaction is tightly coupled to the Na(+) pumping activity and specifically requires Na(+) for activity. Inhibited by korormicin and 2-N-heptyl-4-hydroxyquinoline N-oxide (HQNO). Functionally, NQR complex catalyzes the reduction of ubiquinone-1 to ubiquinol by two successive reactions, coupled with the transport of Na(+) ions from the cytoplasm to the periplasm. NqrA to NqrE are probably involved in the second step, the conversion of ubisemiquinone to ubiquinol. This Vibrio alginolyticus protein is Na(+)-translocating NADH-quinone reductase subunit A.